The chain runs to 585 residues: Glycerol-3-phosphate dehydrogenase 2 (585 aa).

37 to 65 (DVVVIGGGVVGSGCALDAATRGLKVALVE) serves as a coordination point for FAD.

Belongs to the FAD-dependent glycerol-3-phosphate dehydrogenase family. It depends on FAD as a cofactor.

The protein resides in the cytoplasm. It catalyses the reaction a quinone + sn-glycerol 3-phosphate = dihydroxyacetone phosphate + a quinol. The polypeptide is Glycerol-3-phosphate dehydrogenase 2 (glpD2) (Mycobacterium bovis (strain ATCC BAA-935 / AF2122/97)).